The following is a 368-amino-acid chain: Propane 2-monooxygenase, hydroxylase component small subunit (368 aa).

Positions 1-17 are enriched in basic and acidic residues; sequence MSAPEKPRERSFPKIEF. A disordered region spans residues 1-32; it reads MSAPEKPRERSFPKIEFTDSEAGAKEFPSSKS.

This sequence belongs to the TmoE/XamoE family. In terms of assembly, the propane 2-monooxygenase multicomponent enzyme system is composed of an electron transfer component and a monooxygenase component interacting with the effector protein MimD. The electron transfer component is composed of a reductase (MimB), and the monooxygenase component is formed by a large subunit (MimA) and a small subunit (MimC). Requires the presence of the chaperonin-like protein MimG to ensure a productive folding, resulting of a soluble MimC, which leads to the active form of MimABCD.

It catalyses the reaction propane + NADH + O2 + H(+) = propan-2-ol + NAD(+) + H2O. The enzyme catalyses acetone + NADH + O2 + H(+) = hydroxyacetone + NAD(+) + H2O. The catalysed reaction is butan-2-one + NADH + O2 + H(+) = 1-hydroxy-2-butanone + NAD(+) + H2O. It carries out the reaction phenol + NADH + O2 + H(+) = hydroquinone + NAD(+) + H2O. Component of the propane 2-monooxygenase multicomponent enzyme system which is involved in the degradation of propane via the O2-dependent hydroxylation of propane. Also involved in the degradation of acetone via the O2-dependent hydroxylation of acetone. Also able to catalyze the oxidation of phenol, methylethylketone (2-butanone), 1-propanol and 2-propanol. This chain is Propane 2-monooxygenase, hydroxylase component small subunit, found in Mycolicibacterium smegmatis (strain ATCC 700084 / mc(2)155) (Mycobacterium smegmatis).